The chain runs to 237 residues: Probable septum site-determining protein MinC (237 aa).

The protein belongs to the MinC family. As to quaternary structure, interacts with MinD and FtsZ.

Functionally, cell division inhibitor that blocks the formation of polar Z ring septums. Rapidly oscillates between the poles of the cell to destabilize FtsZ filaments that have formed before they mature into polar Z rings. Prevents FtsZ polymerization. The protein is Probable septum site-determining protein MinC of Neisseria gonorrhoeae.